The following is a 303-amino-acid chain: Protease HtpX homolog (303 aa).

Transmembrane regions (helical) follow at residues 19 to 39 (IIIFVISILLFLVCYAIVSYF) and 41 to 61 (LGEFGILVAFLMVFFVNYYAY). Residue His-146 coordinates Zn(2+). Glu-147 is an active-site residue. His-150 lines the Zn(2+) pocket. A run of 2 helical transmembrane segments spans residues 156–176 (VRLQTVAAVMVGLIVILGDSL) and 192–212 (NILGIVSLVIAILAPFLATLL). Glu-221 is a binding site for Zn(2+).

This sequence belongs to the peptidase M48B family. Requires Zn(2+) as cofactor.

The protein localises to the cell inner membrane. The polypeptide is Protease HtpX homolog (Dictyoglomus thermophilum (strain ATCC 35947 / DSM 3960 / H-6-12)).